Here is a 430-residue protein sequence, read N- to C-terminus: Gamma-glutamyl phosphate reductase (430 aa).

This sequence belongs to the gamma-glutamyl phosphate reductase family.

It localises to the cytoplasm. It catalyses the reaction L-glutamate 5-semialdehyde + phosphate + NADP(+) = L-glutamyl 5-phosphate + NADPH + H(+). Its pathway is amino-acid biosynthesis; L-proline biosynthesis; L-glutamate 5-semialdehyde from L-glutamate: step 2/2. Functionally, catalyzes the NADPH-dependent reduction of L-glutamate 5-phosphate into L-glutamate 5-semialdehyde and phosphate. The product spontaneously undergoes cyclization to form 1-pyrroline-5-carboxylate. The polypeptide is Gamma-glutamyl phosphate reductase (Methylococcus capsulatus (strain ATCC 33009 / NCIMB 11132 / Bath)).